The chain runs to 432 residues: MEKITLAPISAVEGTINLPGSKSLSNRALLLAALAKGTTKVTNLLDSDDIRHMLNALKALGVRYQLSDDKTICEVEGLGGTFNIQDNLSLFLGNAGTAMRPLTAALCLKGKTESEIILTGEPRMKERPILHLVDALRQAGADIRYLENEGYPPLAIRNKGIKGGKVKIDGSISSQFLTALLMSAPLAENDTEIEIIGELVSKPYIDITLAMMRDFGVKVENHHYQKFQVKGNQSYISPNKYLVEGDASSASYFLAAGAIKGKVKVTGIGKNSIQGDRLFADVLEKMGAKITWGEDFIQAEHAELNGIDMDMNHIPDAAMTIATTALFSNGETVIRNIYNWRVKETDRLTAMATELRKVGAEVEEGEDFIHIQPLPLNQFKHANIETYNDHRIAMCFSLIALSNTPVTILDPKCTAKTFPTFFSEFEKICLRD.

3 residues coordinate 3-phosphoshikimate: Lys-22, Ser-23, and Arg-27. Lys-22 contributes to the phosphoenolpyruvate binding site. The phosphoenolpyruvate site is built by Gly-96 and Arg-127. Residues Ser-173, Ser-174, Gln-175, Ser-201, Asp-316, Asn-339, and Lys-343 each contribute to the 3-phosphoshikimate site. Position 175 (Gln-175) interacts with phosphoenolpyruvate. Asp-316 acts as the Proton acceptor in catalysis. Residues Arg-347, Arg-391, and Lys-416 each coordinate phosphoenolpyruvate.

The protein belongs to the EPSP synthase family. As to quaternary structure, monomer.

It is found in the cytoplasm. The catalysed reaction is 3-phosphoshikimate + phosphoenolpyruvate = 5-O-(1-carboxyvinyl)-3-phosphoshikimate + phosphate. It participates in metabolic intermediate biosynthesis; chorismate biosynthesis; chorismate from D-erythrose 4-phosphate and phosphoenolpyruvate: step 6/7. Catalyzes the transfer of the enolpyruvyl moiety of phosphoenolpyruvate (PEP) to the 5-hydroxyl of shikimate-3-phosphate (S3P) to produce enolpyruvyl shikimate-3-phosphate and inorganic phosphate. In Haemophilus influenzae (strain 86-028NP), this protein is 3-phosphoshikimate 1-carboxyvinyltransferase.